The primary structure comprises 556 residues: Urocanate hydratase (556 aa).

NAD(+) is bound by residues 52–53, Gln-130, 176–178, Glu-196, Arg-201, 242–243, 263–267, 273–274, and Tyr-322; these read GG, GMG, NA, QTSAH, and YL. The active site involves Cys-410. Position 492 (Gly-492) interacts with NAD(+).

Belongs to the urocanase family. NAD(+) is required as a cofactor.

The protein localises to the cytoplasm. It catalyses the reaction 4-imidazolone-5-propanoate = trans-urocanate + H2O. The protein operates within amino-acid degradation; L-histidine degradation into L-glutamate; N-formimidoyl-L-glutamate from L-histidine: step 2/3. Functionally, catalyzes the conversion of urocanate to 4-imidazolone-5-propionate. The polypeptide is Urocanate hydratase (Bradyrhizobium sp. (strain BTAi1 / ATCC BAA-1182)).